We begin with the raw amino-acid sequence, 90 residues long: MAVKIRLKRMGTKKKPFYRIVVADSRSPRDGRFIETIGTYDPVAEPAQVKIDEELALKWLQNGAKPSDTVRSLLSKQGILEKFHNLKYGK.

The protein belongs to the bacterial ribosomal protein bS16 family.

The sequence is that of Small ribosomal subunit protein bS16 from Geobacillus kaustophilus (strain HTA426).